The following is a 75-amino-acid chain: Large ribosomal subunit protein bL31 (75 aa).

C16, C18, C37, and C40 together coordinate Zn(2+).

It belongs to the bacterial ribosomal protein bL31 family. Type A subfamily. Part of the 50S ribosomal subunit. Requires Zn(2+) as cofactor.

Binds the 23S rRNA. The protein is Large ribosomal subunit protein bL31 of Pseudomonas syringae pv. tomato (strain ATCC BAA-871 / DC3000).